The chain runs to 355 residues: Ataxin-3 (355 aa).

Residue Met1 forms a Peptide (Met-Gly) (interchain with G-Cter in ubiquitin) linkage. A Josephin domain is found at 1–180 (MESIFHEKQE…DCEADQLLQM (180 aa)). Cys14 serves as the catalytic Nucleophile. His119 functions as the Proton acceptor in the catalytic mechanism. Asn134 is an active-site residue. Residue Lys200 forms a Glycyl lysine isopeptide (Lys-Gly) (interchain with G-Cter in ubiquitin) linkage. UIM domains are found at residues 224 to 243 (DDED…IDME) and 244 to 263 (DEEA…SSRG). The segment at 257-333 (MQGSSRGMCE…AGNAMSEEDV (77 aa)) is disordered. Phosphoserine is present on residues Ser268, Ser272, and Ser273. The span at 279–301 (EELRKRREAYFEKQQHQQQEADR) shows a compositional bias: basic and acidic residues. Residues 312–326 (PTTSSGGLRSNQAGN) are compositionally biased toward polar residues. Ser321 is modified (phosphoserine). Residues 329 to 348 (SEEDVLRATVTVSLETAKDS) form the UIM 3 domain.

Interacts with STUB1/CHIP (when monoubiquitinated). Interacts with DNA repair proteins RAD23A and RAD23B. Interacts with BECN1 (via its poly-Gln domain). Interacts with PRKN, UBR2, VCP and tubulin. In terms of processing, monoubiquitinated by UBE2W, possibly leading to activate the deubiquitinating enzyme activity. In terms of tissue distribution, ubiquitously expressed.

It is found in the nucleus matrix. The protein localises to the nucleus. The protein resides in the lysosome membrane. The catalysed reaction is Thiol-dependent hydrolysis of ester, thioester, amide, peptide and isopeptide bonds formed by the C-terminal Gly of ubiquitin (a 76-residue protein attached to proteins as an intracellular targeting signal).. Its function is as follows. Deubiquitinating enzyme involved in protein homeostasis maintenance, transcription, cytoskeleton regulation, myogenesis and degradation of misfolded chaperone substrates. Binds long polyubiquitin chains and trims them, while it has weak or no activity against chains of 4 or less ubiquitins. Involved in degradation of misfolded chaperone substrates via its interaction with STUB1/CHIP: recruited to monoubiquitinated STUB1/CHIP, and restricts the length of ubiquitin chain attached to STUB1/CHIP substrates and preventing further chain extension. Interacts with key regulators of transcription and represses transcription: acts as a histone-binding protein that regulates transcription. Acts as a negative regulator of mTORC1 signaling in response to amino acid deprivation by mediating deubiquitination of RHEB, thereby promoting RHEB inactivation by the TSC-TBC complex. Regulates autophagy via the deubiquitination of 'Lys-402' of BECN1 leading to the stabilization of BECN1. This Rattus norvegicus (Rat) protein is Ataxin-3 (Atxn3).